Here is a 239-residue protein sequence, read N- to C-terminus: Increased recombination centers protein 22-1 (239 aa).

Residues 1 to 19 form the signal peptide; that stretch reads MKLSTIFTAFAATIATVAG. Topologically, residues 20–161 are lumenal; it reads YETTGSKQTV…AAVSFFDPRL (142 aa). The helical transmembrane segment at 162 to 182 threads the bilayer; that stretch reads IFLELVLLITFAGLIYVGYEI. At 183–239 the chain is on the cytoplasmic side; the sequence is WGKQYFKGVAPVKAKKVSAAKASSPVASGPSTTSATGYDTNWIPESHLKQKKTKKVN. The span at 201 to 213 shows a compositional bias: low complexity; it reads AAKASSPVASGPS. The disordered stretch occupies residues 201–222; that stretch reads AAKASSPVASGPSTTSATGYDT.

The protein belongs to the IRC22 family.

The protein resides in the endoplasmic reticulum membrane. In terms of biological role, is probably involved in a pathway contributing to genomic integrity. The protein is Increased recombination centers protein 22-1 (IRC22-1) of Candida albicans (strain SC5314 / ATCC MYA-2876) (Yeast).